Here is a 351-residue protein sequence, read N- to C-terminus: Protein Wnt-2b-A (351 aa).

The signal sequence occupies residues 1–16 (MHFAYILILLILTPRV). Disulfide bonds link cysteine 67–cysteine 78, cysteine 118–cysteine 126, cysteine 128–cysteine 148, cysteine 197–cysteine 211, cysteine 199–cysteine 206, cysteine 269–cysteine 300, cysteine 285–cysteine 295, cysteine 299–cysteine 339, cysteine 315–cysteine 330, cysteine 317–cysteine 327, and cysteine 322–cysteine 323. An N-linked (GlcNAc...) asparagine glycan is attached at asparagine 77. Serine 203 carries the O-palmitoleoyl serine; by PORCN lipid modification.

Belongs to the Wnt family. Post-translationally, palmitoleoylation is required for efficient binding to frizzled receptors. Depalmitoleoylation leads to Wnt signaling pathway inhibition. As to expression, expressed maternally in both vegetal and animal blastomeres with enrichment in the animal hemisphere. Expressed zygotically near the prosencephalic-mesencephalic boundary of the developing brain in neurula and tailbud stages, and also in non-brain areas at tadpole stages.

The protein localises to the secreted. Its subcellular location is the extracellular space. It is found in the extracellular matrix. Functionally, ligand for members of the frizzled family of seven transmembrane receptors. Functions in the canonical Wnt/beta-catenin signaling pathway. The protein is Protein Wnt-2b-A (wnt2b-a) of Xenopus laevis (African clawed frog).